The chain runs to 199 residues: 3-isopropylmalate dehydratase small subunit (199 aa).

This sequence belongs to the LeuD family. LeuD type 1 subfamily. In terms of assembly, heterodimer of LeuC and LeuD.

It carries out the reaction (2R,3S)-3-isopropylmalate = (2S)-2-isopropylmalate. Its pathway is amino-acid biosynthesis; L-leucine biosynthesis; L-leucine from 3-methyl-2-oxobutanoate: step 2/4. Functionally, catalyzes the isomerization between 2-isopropylmalate and 3-isopropylmalate, via the formation of 2-isopropylmaleate. This chain is 3-isopropylmalate dehydratase small subunit, found in Tolumonas auensis (strain DSM 9187 / NBRC 110442 / TA 4).